Consider the following 1303-residue polypeptide: D-lysergyl-peptide-synthetase subunit 2 (1303 aa).

Residues 256–653 form an adenylation (A) domain region; sequence EWCRWTPSAV…CRKSTQVKLR (398 aa). One can recognise a Carrier domain in the interval 793–869; it reads APSNDIEEAF…ELARHTKLVA (77 aa). The residue at position 830 (serine 830) is an O-(pantetheine 4'-phosphoryl)serine. Residues 905–1294 form a condensation (C) domain region; the sequence is EDVYPCTPLQ…HAAPRTLIGD (390 aa).

It belongs to the NRP synthetase family.

The protein operates within alkaloid biosynthesis; ergot alkaloid biosynthesis. In terms of biological role, D-lysergyl-peptide-synthetase subunit 2; part of the gene cluster that mediates the biosynthesis of fungal ergot alkaloid. DmaW catalyzes the first step of ergot alkaloid biosynthesis by condensing dimethylallyl diphosphate (DMAP) and tryptophan to form 4-dimethylallyl-L-tryptophan. The second step is catalyzed by the methyltransferase easF that methylates 4-dimethylallyl-L-tryptophan in the presence of S-adenosyl-L-methionine, resulting in the formation of 4-dimethylallyl-L-abrine. The catalase easC and the FAD-dependent oxidoreductase easE then transform 4-dimethylallyl-L-abrine to chanoclavine-I which is further oxidized by easD in the presence of NAD(+), resulting in the formation of chanoclavine-I aldehyde. Agroclavine dehydrogenase easG then mediates the conversion of chanoclavine-I aldehyde to agroclavine via a non-enzymatic adduct reaction: the substrate is an iminium intermediate that is formed spontaneously from chanoclavine-I aldehyde in the presence of glutathione. The presence of easA is not required to complete this reaction. Further conversion of agroclavine to paspalic acid is a two-step process involving oxidation of agroclavine to elymoclavine and of elymoclavine to paspalic acid, the second step being performed by the elymoclavine oxidase cloA. Paspalic acid is then further converted to D-lysergic acid. Ergopeptines are assembled from D-lysergic acid and three different amino acids by the D-lysergyl-peptide-synthetases composed each of a monomudular and a trimodular nonribosomal peptide synthetase subunit. LpsB and lpsC encode the monomodular subunits responsible for D-lysergic acid activation and incorporation into the ergopeptine backbone. LpsA1 and A2 subunits encode the trimodular nonribosomal peptide synthetase assembling the tripeptide portion of ergopeptines. LpsA1 is responsible for formation of the major ergopeptine, ergotamine, and lpsA2 for alpha-ergocryptine, the minor ergopeptine of the total alkaloid mixture elaborated by C.purpurea. D-lysergyl-tripeptides are assembled by the nonribosomal peptide synthetases and released as N-(D-lysergyl-aminoacyl)-lactams. Cyclolization of the D-lysergyl-tripeptides is performed by the Fe(2+)/2-ketoglutarate-dependent dioxygenase easH which introduces a hydroxyl group into N-(D-lysergyl-aminoacyl)-lactam at alpha-C of the aminoacyl residue followed by spontaneous condensation with the terminal lactam carbonyl group. The sequence is that of D-lysergyl-peptide-synthetase subunit 2 from Claviceps purpurea (strain 20.1) (Ergot fungus).